The chain runs to 424 residues: Glutamate-1-semialdehyde 2,1-aminomutase (424 aa).

N6-(pyridoxal phosphate)lysine is present on Lys-260.

The protein belongs to the class-III pyridoxal-phosphate-dependent aminotransferase family. HemL subfamily. Pyridoxal 5'-phosphate serves as cofactor.

It localises to the cytoplasm. The enzyme catalyses (S)-4-amino-5-oxopentanoate = 5-aminolevulinate. The protein operates within porphyrin-containing compound metabolism; protoporphyrin-IX biosynthesis; 5-aminolevulinate from L-glutamyl-tRNA(Glu): step 2/2. The protein is Glutamate-1-semialdehyde 2,1-aminomutase of Nitrosopumilus maritimus (strain SCM1).